Reading from the N-terminus, the 215-residue chain is Uridine kinase (215 aa).

16–23 is a binding site for ATP; that stretch reads GASASGKS.

Belongs to the uridine kinase family.

The protein localises to the cytoplasm. It carries out the reaction uridine + ATP = UMP + ADP + H(+). It catalyses the reaction cytidine + ATP = CMP + ADP + H(+). Its pathway is pyrimidine metabolism; CTP biosynthesis via salvage pathway; CTP from cytidine: step 1/3. It functions in the pathway pyrimidine metabolism; UMP biosynthesis via salvage pathway; UMP from uridine: step 1/1. This Aliivibrio salmonicida (strain LFI1238) (Vibrio salmonicida (strain LFI1238)) protein is Uridine kinase.